Here is a 653-residue protein sequence, read N- to C-terminus: Beta-galactosidase (653 aa).

Positions 1–22 (MPGVVRLLALLLVPLLLGSARG) are cleaved as a signal peptide. Positions 23 to 27 (LHNAT) are excised as a propeptide. An N-linked (GlcNAc...) asparagine glycan is attached at Asn-25. Substrate is bound at residue Tyr-82. N-linked (GlcNAc...) asparagine glycosylation occurs at Asn-96. Positions 128 and 186 each coordinate substrate. Glu-187 acts as the Proton donor in catalysis. Cys-194 and Cys-229 form a disulfide bridge. A glycan (N-linked (GlcNAc...) asparagine) is linked at Asn-246. Glu-267 serves as the catalytic Nucleophile. Tyr-332 serves as a coordination point for substrate. 3 N-linked (GlcNAc...) asparagine glycosylation sites follow: Asn-463, Asn-497, and Asn-554. Cys-625 and Cys-633 form a disulfide bridge.

Belongs to the glycosyl hydrolase 35 family. Homodimer. May form higher multimers.

It localises to the lysosome. It catalyses the reaction Hydrolysis of terminal non-reducing beta-D-galactose residues in beta-D-galactosides.. Its function is as follows. Cleaves beta-linked terminal galactosyl residues from gangliosides, glycoproteins, and glycosaminoglycans. This is Beta-galactosidase (GLB1) from Bos taurus (Bovine).